Consider the following 224-residue polypeptide: Zinc finger C4H2 domain-containing protein (224 aa).

Residues 12–97 (ENIKEIRNKT…NKLLESTRRL (86 aa)) adopt a coiled-coil conformation. 2 disordered regions span residues 166 to 185 (QAAR…QPPP) and 204 to 224 (PLCK…KPDE). The segment at 189-206 (CLSCHQQIHRNAPICPLC) adopts a C4H2-type zinc-finger fold. A compositionally biased stretch (basic residues) spans 208 to 224 (AKSRSRNPKKPKRKPDE).

Its subcellular location is the nucleus. The protein resides in the cytoplasm. The protein localises to the postsynaptic cell membrane. Its function is as follows. Plays a role in GABAergic and V2 interneurons differentiation. Involved in motoneuron development and in neuromuscular junction formation. The protein is Zinc finger C4H2 domain-containing protein (zc4h2) of Danio rerio (Zebrafish).